We begin with the raw amino-acid sequence, 119 residues long: Large ribosomal subunit protein uL18 (119 aa).

Over residues 1–10 (MKKIKEAEQR) the composition is skewed to basic and acidic residues. The segment at 1–20 (MKKIKEAEQRKLRRKKRIKD) is disordered.

Belongs to the universal ribosomal protein uL18 family. In terms of assembly, part of the 50S ribosomal subunit; part of the 5S rRNA/L5/L18/L25 subcomplex. Contacts the 5S and 23S rRNAs.

In terms of biological role, this is one of the proteins that bind and probably mediate the attachment of the 5S RNA into the large ribosomal subunit, where it forms part of the central protuberance. The polypeptide is Large ribosomal subunit protein uL18 (Borreliella burgdorferi (strain ATCC 35210 / DSM 4680 / CIP 102532 / B31) (Borrelia burgdorferi)).